The sequence spans 354 residues: Ferredoxin--NADP reductase (354 aa).

The FAD site is built by Asp39, Gln47, Tyr52, Val92, Phe127, Asp296, and Thr337.

This sequence belongs to the ferredoxin--NADP reductase type 2 family. In terms of assembly, homodimer. It depends on FAD as a cofactor.

The enzyme catalyses 2 reduced [2Fe-2S]-[ferredoxin] + NADP(+) + H(+) = 2 oxidized [2Fe-2S]-[ferredoxin] + NADPH. The chain is Ferredoxin--NADP reductase from Albidiferax ferrireducens (strain ATCC BAA-621 / DSM 15236 / T118) (Rhodoferax ferrireducens).